We begin with the raw amino-acid sequence, 82 residues long: ATP synthase subunit c (82 aa).

2 consecutive transmembrane segments (helical) span residues 6-26 (LGLT…GCGI) and 49-69 (IMVT…YALV).

Belongs to the ATPase C chain family. F-type ATPases have 2 components, F(1) - the catalytic core - and F(0) - the membrane proton channel. F(1) has five subunits: alpha(3), beta(3), gamma(1), delta(1), epsilon(1). F(0) has three main subunits: a(1), b(2) and c(10-14). The alpha and beta chains form an alternating ring which encloses part of the gamma chain. F(1) is attached to F(0) by a central stalk formed by the gamma and epsilon chains, while a peripheral stalk is formed by the delta and b chains.

It is found in the cell inner membrane. In terms of biological role, f(1)F(0) ATP synthase produces ATP from ADP in the presence of a proton or sodium gradient. F-type ATPases consist of two structural domains, F(1) containing the extramembraneous catalytic core and F(0) containing the membrane proton channel, linked together by a central stalk and a peripheral stalk. During catalysis, ATP synthesis in the catalytic domain of F(1) is coupled via a rotary mechanism of the central stalk subunits to proton translocation. Its function is as follows. Key component of the F(0) channel; it plays a direct role in translocation across the membrane. A homomeric c-ring of between 10-14 subunits forms the central stalk rotor element with the F(1) delta and epsilon subunits. The chain is ATP synthase subunit c from Nitratidesulfovibrio vulgaris (strain ATCC 29579 / DSM 644 / CCUG 34227 / NCIMB 8303 / VKM B-1760 / Hildenborough) (Desulfovibrio vulgaris).